The sequence spans 375 residues: MFNIIKNDKNSNARLGILELPHGNVATPCFMPVGTLGVMKALKHDVLEKLGCDLMLANTYHLYLRPGIDVIKKYGNLHNFTTWNKNFLTDSGGFQVFSLSNFRKIEDEGVDFKSHIDGSRHYFTPESVFSMQETFESDIIMALDICSPYGIDYDEASLYTNITTSWARRTLCAYKNRKEGYEGLLFLITQGNFFKDLRKRSTELILELNSPGIAIGGISVGEPRDRYLEILEYNSSLIPKDKPKYVMGIGTPHYILDAIYNGIDIFDCVNPTRIARHGSLLTDNGILRINRAEFCFDTCSVERECSCTLCTRYSRGYLRHLFKSEEALGVMLASEHNIHYMFRLINKTKNAIMNDNFVKFRKLYLDKYDEGNLNE.

The active-site Proton acceptor is the aspartate 90. Residues 90 to 94 (DSGGF), aspartate 144, glutamine 190, and glycine 217 each bind substrate. An RNA binding region spans residues 248 to 254 (GIGTPHY). The active-site Nucleophile is the aspartate 267. Residues 272–276 (TRIAR) form an RNA binding; important for wobble base 34 recognition region. Cysteine 305, cysteine 307, cysteine 310, and histidine 336 together coordinate Zn(2+).

It belongs to the queuine tRNA-ribosyltransferase family. In terms of assembly, homodimer. Within each dimer, one monomer is responsible for RNA recognition and catalysis, while the other monomer binds to the replacement base PreQ1. It depends on Zn(2+) as a cofactor.

It catalyses the reaction 7-aminomethyl-7-carbaguanine + guanosine(34) in tRNA = 7-aminomethyl-7-carbaguanosine(34) in tRNA + guanine. The protein operates within tRNA modification; tRNA-queuosine biosynthesis. Functionally, catalyzes the base-exchange of a guanine (G) residue with the queuine precursor 7-aminomethyl-7-deazaguanine (PreQ1) at position 34 (anticodon wobble position) in tRNAs with GU(N) anticodons (tRNA-Asp, -Asn, -His and -Tyr). Catalysis occurs through a double-displacement mechanism. The nucleophile active site attacks the C1' of nucleotide 34 to detach the guanine base from the RNA, forming a covalent enzyme-RNA intermediate. The proton acceptor active site deprotonates the incoming PreQ1, allowing a nucleophilic attack on the C1' of the ribose to form the product. After dissociation, two additional enzymatic reactions on the tRNA convert PreQ1 to queuine (Q), resulting in the hypermodified nucleoside queuosine (7-(((4,5-cis-dihydroxy-2-cyclopenten-1-yl)amino)methyl)-7-deazaguanosine). This Borrelia recurrentis (strain A1) protein is Queuine tRNA-ribosyltransferase.